Reading from the N-terminus, the 299-residue chain is ATP phosphoribosyltransferase (299 aa).

The protein belongs to the ATP phosphoribosyltransferase family. Long subfamily. Requires Mg(2+) as cofactor.

The protein resides in the cytoplasm. It catalyses the reaction 1-(5-phospho-beta-D-ribosyl)-ATP + diphosphate = 5-phospho-alpha-D-ribose 1-diphosphate + ATP. It functions in the pathway amino-acid biosynthesis; L-histidine biosynthesis; L-histidine from 5-phospho-alpha-D-ribose 1-diphosphate: step 1/9. Its activity is regulated as follows. Feedback inhibited by histidine. In terms of biological role, catalyzes the condensation of ATP and 5-phosphoribose 1-diphosphate to form N'-(5'-phosphoribosyl)-ATP (PR-ATP). Has a crucial role in the pathway because the rate of histidine biosynthesis seems to be controlled primarily by regulation of HisG enzymatic activity. This Campylobacter jejuni subsp. doylei (strain ATCC BAA-1458 / RM4099 / 269.97) protein is ATP phosphoribosyltransferase.